We begin with the raw amino-acid sequence, 231 residues long: Uridylate kinase (231 aa).

Position 6–9 (6–9 (KLSG)) interacts with ATP. Residues 14–19 (GEGGRG) form an involved in allosteric activation by GTP region. ATP is bound by residues glycine 49 and arginine 53. UMP-binding positions include aspartate 66 and 127–134 (TSNPFFTT). ATP contacts are provided by threonine 154, tyrosine 160, and aspartate 163.

The protein belongs to the UMP kinase family. As to quaternary structure, homohexamer.

Its subcellular location is the cytoplasm. It catalyses the reaction UMP + ATP = UDP + ADP. Its pathway is pyrimidine metabolism; CTP biosynthesis via de novo pathway; UDP from UMP (UMPK route): step 1/1. Allosterically activated by GTP. Inhibited by UTP. Its function is as follows. Catalyzes the reversible phosphorylation of UMP to UDP. In Thermotoga petrophila (strain ATCC BAA-488 / DSM 13995 / JCM 10881 / RKU-1), this protein is Uridylate kinase.